The sequence spans 135 residues: Photosystem II extrinsic protein V (135 aa).

4 residues coordinate heme c: C37, C40, H41, and H92.

This sequence belongs to the cytochrome c family. PsbV subfamily. In terms of assembly, PSII is composed of 1 copy each of membrane proteins PsbA, PsbB, PsbC, PsbD, PsbE, PsbF, PsbH, PsbI, PsbJ, PsbK, PsbL, PsbM, PsbT, PsbX, PsbY, PsbZ, Psb30/Ycf12, peripheral proteins PsbO, CyanoQ (PsbQ), PsbU, PsbV and a large number of cofactors. It forms dimeric complexes. Heme c serves as cofactor.

The protein localises to the cellular thylakoid membrane. In terms of biological role, one of the extrinsic, lumenal subunits of photosystem II (PSII). PSII is a light-driven water plastoquinone oxidoreductase, using light energy to abstract electrons from H(2)O, generating a proton gradient subsequently used for ATP formation. The extrinsic proteins stabilize the structure of photosystem II oxygen-evolving complex (OEC), the ion environment of oxygen evolution and protect the OEC against heat-induced inactivation. Low-potential cytochrome c that plays a role in the OEC of PSII. In Microcystis aeruginosa, this protein is Photosystem II extrinsic protein V.